The chain runs to 291 residues: 3-hydroxy-5-phosphonooxypentane-2,4-dione thiolase (291 aa).

The active-site Schiff-base intermediate with substrate is the Lys-203.

The protein belongs to the DeoC/FbaB aldolase family. As to quaternary structure, homodecamer.

It is found in the cytoplasm. It catalyses the reaction dihydroxyacetone phosphate + acetyl-CoA = 3-hydroxy-2,4-dioxopentyl phosphate + CoA. Involved in the degradation of phospho-AI-2, thereby terminating induction of the lsr operon and closing the AI-2 signaling cycle. Catalyzes the transfer of an acetyl moiety from 3-hydroxy-5-phosphonooxypentane-2,4-dione to CoA to form glycerone phosphate and acetyl-CoA. The sequence is that of 3-hydroxy-5-phosphonooxypentane-2,4-dione thiolase from Yersinia enterocolitica serotype O:8 / biotype 1B (strain NCTC 13174 / 8081).